Reading from the N-terminus, the 571-residue chain is Proline--tRNA ligase (571 aa).

This sequence belongs to the class-II aminoacyl-tRNA synthetase family. ProS type 1 subfamily. As to quaternary structure, homodimer.

Its subcellular location is the cytoplasm. The enzyme catalyses tRNA(Pro) + L-proline + ATP = L-prolyl-tRNA(Pro) + AMP + diphosphate. In terms of biological role, catalyzes the attachment of proline to tRNA(Pro) in a two-step reaction: proline is first activated by ATP to form Pro-AMP and then transferred to the acceptor end of tRNA(Pro). As ProRS can inadvertently accommodate and process non-cognate amino acids such as alanine and cysteine, to avoid such errors it has two additional distinct editing activities against alanine. One activity is designated as 'pretransfer' editing and involves the tRNA(Pro)-independent hydrolysis of activated Ala-AMP. The other activity is designated 'posttransfer' editing and involves deacylation of mischarged Ala-tRNA(Pro). The misacylated Cys-tRNA(Pro) is not edited by ProRS. This chain is Proline--tRNA ligase, found in Pseudomonas aeruginosa (strain LESB58).